The following is a 103-amino-acid chain: N(4)-acetylcytidine amidohydrolase (103 aa).

An ASCH domain is found at 6–94 (ITFFQRFQND…IAEIYPNQTQ (89 aa)). Lysine 21 acts as the Proton acceptor in catalysis. Threonine 24 serves as the catalytic Nucleophile. Glutamate 74 functions as the Proton donor in the catalytic mechanism.

It belongs to the N(4)-acetylcytidine amidohydrolase family.

It catalyses the reaction N(4)-acetylcytidine + H2O = cytidine + acetate + H(+). The catalysed reaction is N(4)-acetyl-2'-deoxycytidine + H2O = 2'-deoxycytidine + acetate + H(+). It carries out the reaction N(4)-acetylcytosine + H2O = cytosine + acetate + H(+). Functionally, catalyzes the hydrolysis of N(4)-acetylcytidine (ac4C). The sequence is that of N(4)-acetylcytidine amidohydrolase (yqfB) from Salmonella schwarzengrund (strain CVM19633).